Here is a 443-residue protein sequence, read N- to C-terminus: Protein UIP5 (443 aa).

The N-terminal stretch at 1-27 (MSRDVRAEKLAISLLILSLFLIFQLVA) is a signal peptide. The Perinuclear space portion of the chain corresponds to 28-398 (EIYLNNGDQY…LFKVVLTIWH (371 aa)). A helical membrane pass occupies residues 399–420 (YSEILLLIMGIYLFSACIRVFQ). Topologically, residues 421-443 (RRFKKIRSRRKRAGSHSVGLLPM) are cytoplasmic.

It is found in the nucleus membrane. This is Protein UIP5 (UIP5) from Saccharomyces cerevisiae (strain ATCC 204508 / S288c) (Baker's yeast).